Consider the following 415-residue polypeptide: Adenosylhomocysteinase (415 aa).

Substrate is bound by residues threonine 53, aspartate 124, and glutamate 147. 148–150 (TTT) contacts NAD(+). Residues lysine 177 and aspartate 181 each coordinate substrate. NAD(+)-binding positions include asparagine 182, 211–216 (GYGWVG), glutamate 234, asparagine 269, 290–292 (SGH), and asparagine 337.

This sequence belongs to the adenosylhomocysteinase family. Requires NAD(+) as cofactor.

The protein resides in the cytoplasm. The catalysed reaction is S-adenosyl-L-homocysteine + H2O = L-homocysteine + adenosine. Its pathway is amino-acid biosynthesis; L-homocysteine biosynthesis; L-homocysteine from S-adenosyl-L-homocysteine: step 1/1. May play a key role in the regulation of the intracellular concentration of adenosylhomocysteine. In Sulfolobus acidocaldarius (strain ATCC 33909 / DSM 639 / JCM 8929 / NBRC 15157 / NCIMB 11770), this protein is Adenosylhomocysteinase.